A 267-amino-acid polypeptide reads, in one-letter code: Tryptophan synthase alpha chain (267 aa).

Catalysis depends on proton acceptor residues Glu-49 and Asp-60.

Belongs to the TrpA family. Tetramer of two alpha and two beta chains.

It carries out the reaction (1S,2R)-1-C-(indol-3-yl)glycerol 3-phosphate + L-serine = D-glyceraldehyde 3-phosphate + L-tryptophan + H2O. The protein operates within amino-acid biosynthesis; L-tryptophan biosynthesis; L-tryptophan from chorismate: step 5/5. The alpha subunit is responsible for the aldol cleavage of indoleglycerol phosphate to indole and glyceraldehyde 3-phosphate. The chain is Tryptophan synthase alpha chain from Cyanothece sp. (strain PCC 7425 / ATCC 29141).